Here is a 204-residue protein sequence, read N- to C-terminus: Somatotropin (204 aa).

A signal peptide spans methionine 1 to serine 17. Residue glutamine 18 is modified to Pyrrolidone carboxylic acid. 2 cysteine pairs are disulfide-bonded: cysteine 69/cysteine 177 and cysteine 194/cysteine 202.

Belongs to the somatotropin/prolactin family.

Its subcellular location is the secreted. Its function is as follows. Growth hormone plays an important role in growth control and is involved in the regulation of several anabolic processes. Implicated as an osmoregulatory substance important for seawater adaptation. In Seriola quinqueradiata (Five-ray yellowtail), this protein is Somatotropin (gh).